Here is a 517-residue protein sequence, read N- to C-terminus: GMP synthase [glutamine-hydrolyzing] (517 aa).

In terms of domain architecture, Glutamine amidotransferase type-1 spans lysine 11–asparagine 202. Cysteine 88 functions as the Nucleophile in the catalytic mechanism. Residues histidine 176 and glutamate 178 contribute to the active site. Residues tryptophan 203–arginine 392 form the GMPS ATP-PPase domain. ATP is bound at residue serine 230–serine 236.

As to quaternary structure, homodimer.

It catalyses the reaction XMP + L-glutamine + ATP + H2O = GMP + L-glutamate + AMP + diphosphate + 2 H(+). It participates in purine metabolism; GMP biosynthesis; GMP from XMP (L-Gln route): step 1/1. Catalyzes the synthesis of GMP from XMP. The polypeptide is GMP synthase [glutamine-hydrolyzing] (Pediococcus pentosaceus (strain ATCC 25745 / CCUG 21536 / LMG 10740 / 183-1w)).